A 207-amino-acid chain; its full sequence is Ribosomal RNA small subunit methyltransferase G (207 aa).

S-adenosyl-L-methionine is bound by residues glycine 76, glutamine 81, valine 127–glutamate 128, and arginine 141.

It belongs to the methyltransferase superfamily. RNA methyltransferase RsmG family.

The protein localises to the cytoplasm. It catalyses the reaction guanosine(527) in 16S rRNA + S-adenosyl-L-methionine = N(7)-methylguanosine(527) in 16S rRNA + S-adenosyl-L-homocysteine. Functionally, specifically methylates the N7 position of guanine in position 527 of 16S rRNA. This is Ribosomal RNA small subunit methyltransferase G from Neisseria meningitidis serogroup C (strain 053442).